The following is a 165-amino-acid chain: MPLLDSFKVDHTKMPAPAVRLAKTMQTPKGDTISVFDLRFTRPNCELLSEKGIHTMEHLIAGFMREHLNNTRVEIIDISPMGCRTGFYMSVVGAPNEYNVKEAWESSMRDVLRICDEKDIPELNIYQCGTAKMHSLKEAQDIAQVVLDKGVSVMNTQELLLKDFA.

H54, H58, and C128 together coordinate Fe cation.

The protein belongs to the LuxS family. In terms of assembly, homodimer. Requires Fe cation as cofactor.

It catalyses the reaction S-(5-deoxy-D-ribos-5-yl)-L-homocysteine = (S)-4,5-dihydroxypentane-2,3-dione + L-homocysteine. Its function is as follows. Involved in the synthesis of autoinducer 2 (AI-2) which is secreted by bacteria and is used to communicate both the cell density and the metabolic potential of the environment. The regulation of gene expression in response to changes in cell density is called quorum sensing. Catalyzes the transformation of S-ribosylhomocysteine (RHC) to homocysteine (HC) and 4,5-dihydroxy-2,3-pentadione (DPD). In Helicobacter hepaticus (strain ATCC 51449 / 3B1), this protein is S-ribosylhomocysteine lyase.